Here is a 184-residue protein sequence, read N- to C-terminus: (2E)-enoyl-[ACP] glycyltransferase (184 aa).

This sequence belongs to the FcoT family.

It carries out the reaction a (3R)-3-[(carboxymethyl)amino]fatty acid + holo-[ACP] + H(+) = a (2E)-enoyl-[ACP] + glycine + H2O. The enzyme catalyses (3R)-3-[(carboxylmethyl)amino]decanoate + holo-[ACP] + H(+) = (2E)-decenoyl-[ACP] + glycine + H2O. In terms of biological role, involved in the biosynthesis of a unique class of isonitrile lipopeptides (INLPs) that seem to play a role in metal acquisition in M.marinum. Catalyzes a Michael addition of glycine to the beta-position of an alpha,beta-unsaturated fatty acyl-[ACP], producing a (3R)-3-[(carboxymethyl)amino]fatty acid. Acts on the (2E)-decenoyl moiety loaded on the acyl-carrier protein MmaB, forming the product (3R)-3-[(carboxymethyl)amino]decanoate released from MmaB. The chain is (2E)-enoyl-[ACP] glycyltransferase from Mycobacterium marinum (strain ATCC BAA-535 / M).